Here is a 277-residue protein sequence, read N- to C-terminus: Phosphoenolpyruvate synthase regulatory protein (277 aa).

An ADP-binding site is contributed by 157–164 (GVSRCGKT).

This sequence belongs to the pyruvate, phosphate/water dikinase regulatory protein family. PSRP subfamily.

The enzyme catalyses [pyruvate, water dikinase] + ADP = [pyruvate, water dikinase]-phosphate + AMP + H(+). It carries out the reaction [pyruvate, water dikinase]-phosphate + phosphate + H(+) = [pyruvate, water dikinase] + diphosphate. In terms of biological role, bifunctional serine/threonine kinase and phosphorylase involved in the regulation of the phosphoenolpyruvate synthase (PEPS) by catalyzing its phosphorylation/dephosphorylation. The protein is Phosphoenolpyruvate synthase regulatory protein of Salmonella gallinarum (strain 287/91 / NCTC 13346).